A 182-amino-acid polypeptide reads, in one-letter code: Glycerol-3-phosphate acyltransferase 1 (182 aa).

The next 5 membrane-spanning stretches (helical) occupy residues 5–25, 54–74, 81–101, 117–137, and 157–177; these read MQFLYLVASYLFGNILTAYIV, GYFVATFLGDAIKGAIVVSIA, STFLMLTLLAVIMGHIYPILF, IAFDYLIALTLVTVFIIFYLI, and ILYSYSIVTTILSVLIIVLIL.

Belongs to the PlsY family. As to quaternary structure, probably interacts with PlsX.

Its subcellular location is the cell membrane. The catalysed reaction is an acyl phosphate + sn-glycerol 3-phosphate = a 1-acyl-sn-glycero-3-phosphate + phosphate. Its pathway is lipid metabolism; phospholipid metabolism. Functionally, catalyzes the transfer of an acyl group from acyl-phosphate (acyl-PO(4)) to glycerol-3-phosphate (G3P) to form lysophosphatidic acid (LPA). This enzyme utilizes acyl-phosphate as fatty acyl donor, but not acyl-CoA or acyl-ACP. The chain is Glycerol-3-phosphate acyltransferase 1 from Bacillus thuringiensis subsp. konkukian (strain 97-27).